Consider the following 101-residue polypeptide: Small ribosomal subunit protein uS14 (101 aa).

It belongs to the universal ribosomal protein uS14 family. In terms of assembly, part of the 30S ribosomal subunit. Contacts proteins S3 and S10.

Its function is as follows. Binds 16S rRNA, required for the assembly of 30S particles and may also be responsible for determining the conformation of the 16S rRNA at the A site. This is Small ribosomal subunit protein uS14 from Polaromonas sp. (strain JS666 / ATCC BAA-500).